The primary structure comprises 357 residues: 3-isopropylmalate dehydrogenase (357 aa).

Position 76-89 (76-89) interacts with NAD(+); it reads GPQWDTIDPALRPE. Residues arginine 96, arginine 106, arginine 134, and aspartate 224 each contribute to the substrate site. Mg(2+)-binding residues include aspartate 224, aspartate 248, and aspartate 252. 282 to 294 contacts NAD(+); the sequence is GSAPDIAGKGIAN.

The protein belongs to the isocitrate and isopropylmalate dehydrogenases family. LeuB type 1 subfamily. As to quaternary structure, homodimer. Mg(2+) is required as a cofactor. It depends on Mn(2+) as a cofactor.

The protein localises to the cytoplasm. It carries out the reaction (2R,3S)-3-isopropylmalate + NAD(+) = 4-methyl-2-oxopentanoate + CO2 + NADH. It functions in the pathway amino-acid biosynthesis; L-leucine biosynthesis; L-leucine from 3-methyl-2-oxobutanoate: step 3/4. Its function is as follows. Catalyzes the oxidation of 3-carboxy-2-hydroxy-4-methylpentanoate (3-isopropylmalate) to 3-carboxy-4-methyl-2-oxopentanoate. The product decarboxylates to 4-methyl-2 oxopentanoate. In Xanthomonas axonopodis pv. citri (strain 306), this protein is 3-isopropylmalate dehydrogenase.